Here is a 199-residue protein sequence, read N- to C-terminus: Recombination protein RecR (199 aa).

The C4-type zinc-finger motif lies at 56-71; the sequence is CQVCFHLSAESTCEIC. The region spanning 79–173 is the Toprim domain; sequence QTLCVVADSR…KVTRIAFGLP (95 aa).

The protein belongs to the RecR family.

Functionally, may play a role in DNA repair. It seems to be involved in an RecBC-independent recombinational process of DNA repair. It may act with RecF and RecO. This Gloeothece citriformis (strain PCC 7424) (Cyanothece sp. (strain PCC 7424)) protein is Recombination protein RecR.